The chain runs to 413 residues: Protein MANNAN SYNTHESIS-RELATED (413 aa).

At Met-1 to Glu-5 the chain is on the cytoplasmic side. Residues Ile-6–Ile-26 traverse the membrane as a helical; Signal-anchor for type II membrane protein segment. The Lumenal portion of the chain corresponds to Lys-27–Cys-413. An N-linked (GlcNAc...) asparagine glycan is attached at Asn-207. Substrate is bound at residue Asp-255–Arg-257.

This sequence belongs to the glycosyltransferase GT106 family. In terms of tissue distribution, highly and specifically expressed in the endosperm.

It localises to the golgi apparatus membrane. It participates in glycan biosynthesis. In terms of biological role, glycosyltransferase involved in mannan biosynthesis. This chain is Protein MANNAN SYNTHESIS-RELATED, found in Trigonella foenum-graecum (Fenugreek).